The chain runs to 99 residues: Nucleoid-associated protein MGAS2096_Spy1605 (99 aa).

It belongs to the YbaB/EbfC family. In terms of assembly, homodimer.

The protein resides in the cytoplasm. It is found in the nucleoid. Binds to DNA and alters its conformation. May be involved in regulation of gene expression, nucleoid organization and DNA protection. This Streptococcus pyogenes serotype M12 (strain MGAS2096) protein is Nucleoid-associated protein MGAS2096_Spy1605.